The primary structure comprises 327 residues: WRKY transcription factor WRKY76 (327 aa).

A coiled-coil region spans residues 56–76; the sequence is AKILEAKVTQMSEENRRLTEV. Residues 88 to 134 form a disordered region; that stretch reads LGLDGSASPPRPVSPLSGKKRSRESMETANSCDANSNRHQGGDADHA. The Nuclear localization signal signature appears at 106-112; the sequence is KKRSRES. Residues 114–126 are compositionally biased toward polar residues; the sequence is ETANSCDANSNRH. The WRKY DNA-binding region spans 160–226; sequence DTSLVVKDGY…YEGEHNHPHP (67 aa).

It belongs to the WRKY group II-a family.

Its subcellular location is the nucleus. In terms of biological role, transcription repressor. Interacts specifically with the W box (5'-(T)TGAC[CT]-3'), a frequently occurring elicitor-responsive cis-acting element. Regulates, probably indirectly, the activation of defense-related genes during defense response. Modulates plant innate immunity against X.oryzae pv. oryzae (Xoo). In Oryza sativa subsp. indica (Rice), this protein is WRKY transcription factor WRKY76.